Consider the following 188-residue polypeptide: ATP synthase subunit delta (188 aa).

Belongs to the ATPase delta chain family. As to quaternary structure, F-type ATPases have 2 components, F(1) - the catalytic core - and F(0) - the membrane proton channel. F(1) has five subunits: alpha(3), beta(3), gamma(1), delta(1), epsilon(1). F(0) has three main subunits: a(1), b(2) and c(10-14). The alpha and beta chains form an alternating ring which encloses part of the gamma chain. F(1) is attached to F(0) by a central stalk formed by the gamma and epsilon chains, while a peripheral stalk is formed by the delta and b chains.

It is found in the cell membrane. F(1)F(0) ATP synthase produces ATP from ADP in the presence of a proton or sodium gradient. F-type ATPases consist of two structural domains, F(1) containing the extramembraneous catalytic core and F(0) containing the membrane proton channel, linked together by a central stalk and a peripheral stalk. During catalysis, ATP synthesis in the catalytic domain of F(1) is coupled via a rotary mechanism of the central stalk subunits to proton translocation. Functionally, this protein is part of the stalk that links CF(0) to CF(1). It either transmits conformational changes from CF(0) to CF(1) or is implicated in proton conduction. The chain is ATP synthase subunit delta from Malacoplasma penetrans (strain HF-2) (Mycoplasma penetrans).